A 270-amino-acid chain; its full sequence is Bis(5'-nucleosyl)-tetraphosphatase, symmetrical (270 aa).

The protein belongs to the Ap4A hydrolase family.

It catalyses the reaction P(1),P(4)-bis(5'-adenosyl) tetraphosphate + H2O = 2 ADP + 2 H(+). Its function is as follows. Hydrolyzes diadenosine 5',5'''-P1,P4-tetraphosphate to yield ADP. This Cellvibrio japonicus (strain Ueda107) (Pseudomonas fluorescens subsp. cellulosa) protein is Bis(5'-nucleosyl)-tetraphosphatase, symmetrical.